The chain runs to 135 residues: AYTLATHTAGVIPAGKLERVDPTTVRQEGPWADPAQAVVQTGPNQYTVYVLAFAFGYQPNPIEVPQGAEIVFKITSPDVIHGFHVEGTNINVEVLPGEVSTVRYTFKRPGEYRIICNQYCGLGHQNMFGTIVVKE.

His81, Cys116, Cys120, and His124 together coordinate Cu cation.

Belongs to the cytochrome c oxidase subunit 2 family.

The protein resides in the cell membrane. The catalysed reaction is 4 Fe(II)-[cytochrome c] + O2 + 8 H(+)(in) = 4 Fe(III)-[cytochrome c] + 2 H2O + 4 H(+)(out). Its function is as follows. Subunits I and II form the functional core of the enzyme complex. Electrons originating in cytochrome c are transferred via heme a and Cu(A) to the binuclear center formed by heme a3 and Cu(B). The polypeptide is Cytochrome c oxidase subunit 2 (cbaB) (Thermus thermophilus).